We begin with the raw amino-acid sequence, 199 residues long: Adenosylcobinamide-GDP ribazoletransferase (199 aa).

The next 2 helical transmembrane spans lie at 2-22 and 61-81; these read LAGGVPHGTVAFAYLAVVFAV and IAAVVVVVAGLVTGSLGVAAL.

This sequence belongs to the CobS family. Requires Mg(2+) as cofactor.

The protein localises to the cell membrane. It carries out the reaction alpha-ribazole + adenosylcob(III)inamide-GDP = adenosylcob(III)alamin + GMP + H(+). It catalyses the reaction alpha-ribazole 5'-phosphate + adenosylcob(III)inamide-GDP = adenosylcob(III)alamin 5'-phosphate + GMP + H(+). Its pathway is cofactor biosynthesis; adenosylcobalamin biosynthesis; adenosylcobalamin from cob(II)yrinate a,c-diamide: step 7/7. In terms of biological role, joins adenosylcobinamide-GDP and alpha-ribazole to generate adenosylcobalamin (Ado-cobalamin). Also synthesizes adenosylcobalamin 5'-phosphate from adenosylcobinamide-GDP and alpha-ribazole 5'-phosphate. The chain is Adenosylcobinamide-GDP ribazoletransferase from Halobacterium salinarum (strain ATCC 700922 / JCM 11081 / NRC-1) (Halobacterium halobium).